Here is a 1923-residue protein sequence, read N- to C-terminus: GREB1-like protein (1923 aa).

Positions 87–96 (EDDEDDEEMS) are enriched in acidic residues. Disordered regions lie at residues 87–111 (EDDE…KPAP), 246–326 (SCHS…GPPK), and 1101–1222 (RAAV…RGCR). Residues 252 to 262 (PSSSVSSTVTP) show a composition bias toward low complexity. 3 stretches are compositionally biased toward polar residues: residues 263-278 (ENGT…TQTD), 296-307 (TPAHTGNYSLSP), and 1119-1161 (PQSN…SPAT). Residues 1195 to 1206 (SSTTSKPSSSSS) show a composition bias toward low complexity. Residues 1843 to 1862 (GVFFSGLLLYLCDSFVGADL) traverse the membrane as a helical segment.

It belongs to the GREB1 family. Widely expressed, with prominent expression in the cochlea. Expressed at high levels in fetal kidney. In adult tissues, highest levels in vagina, cervix and epididymis.

It is found in the membrane. Plays a major role in early metanephros and genital development. The sequence is that of GREB1-like protein (GREB1L) from Homo sapiens (Human).